The sequence spans 315 residues: Salivary protein SG34 (315 aa).

A signal peptide spans 1-20 (MPVSYDFVILLALFIVLARS). Residues 98–161 (NAEVELLRES…QEEIEQQTKQ (64 aa)) are a coiled coil.

Functionally, (Microbial infection) Modulates replication of duck Tembusu virus in salivary glands and virus release into the saliva, probably via the regulation of antimicrobial peptides expression in response to duck Tembusu virus infection. This is Salivary protein SG34 from Aedes albopictus (Asian tiger mosquito).